A 966-amino-acid chain; its full sequence is Protein mes-1 (966 aa).

The N-terminal stretch at 1–19 is a signal peptide; sequence MKIHHFLTLLCTFLPLTTT. Residues 20 to 470 are Extracellular-facing; sequence ALTNSTPLSL…QASDIPTSVE (451 aa). Asn62, Asn126, Asn183, Asn214, Asn251, and Asn372 each carry an N-linked (GlcNAc...) asparagine glycan. A helical transmembrane segment spans residues 471–491; it reads LMAVVLATSAIFALIALFLLY. Residues 492–966 are Cytoplasmic-facing; sequence RKRKRDKKAR…FKSVNVAATV (475 aa). The Protein kinase domain occupies 656 to 966; it reads HNFNERIEKQ…FKSVNVAATV (311 aa). ATP is bound by residues 662–670 and Lys685; that span reads IEKQAYWLM.

Belongs to the protein kinase superfamily.

The protein resides in the cell membrane. During early embryogenesis, controls asymmetric cell division and the asymmetric localization of P granules of germline precursor P2 and its descendant P3. Probably upstream of tyrosine kinase src-1, plays a role in endoderm development by controlling spindle orientation during EMS blastomere cell division. Controls EMS spindle orientation probably by promoting lin-5 and gpr-1/2 enrichment at, and let-99 exclusion from the junction between P2 and EMS cells. The chain is Protein mes-1 from Caenorhabditis elegans.